Here is a 503-residue protein sequence, read N- to C-terminus: Probable cytosol aminopeptidase (503 aa).

The Mn(2+) site is built by Lys274 and Asp279. Lys286 is a catalytic residue. Asp297, Asp356, and Glu358 together coordinate Mn(2+). Arg360 is an active-site residue.

This sequence belongs to the peptidase M17 family. Mn(2+) is required as a cofactor.

Its subcellular location is the cytoplasm. The enzyme catalyses Release of an N-terminal amino acid, Xaa-|-Yaa-, in which Xaa is preferably Leu, but may be other amino acids including Pro although not Arg or Lys, and Yaa may be Pro. Amino acid amides and methyl esters are also readily hydrolyzed, but rates on arylamides are exceedingly low.. It catalyses the reaction Release of an N-terminal amino acid, preferentially leucine, but not glutamic or aspartic acids.. Presumably involved in the processing and regular turnover of intracellular proteins. Catalyzes the removal of unsubstituted N-terminal amino acids from various peptides. This is Probable cytosol aminopeptidase from Burkholderia ambifaria (strain ATCC BAA-244 / DSM 16087 / CCUG 44356 / LMG 19182 / AMMD) (Burkholderia cepacia (strain AMMD)).